A 37-amino-acid chain; its full sequence is Potassium channel toxin alpha-KTx 2.14 (37 aa).

3 disulfides stabilise this stretch: Cys-7-Cys-28, Cys-13-Cys-33, and Cys-17-Cys-35.

It belongs to the short scorpion toxin superfamily. Potassium channel inhibitor family. Alpha-KTx 02 subfamily. Expressed by the venom gland.

It localises to the secreted. Reversibly blocks hKv1.1/KCNA1 (50% inhibition of current at 1 uM). Seems not to be voltage-dependent. This Heteroctenus garridoi (Cuban scorpion) protein is Potassium channel toxin alpha-KTx 2.14.